A 92-amino-acid chain; its full sequence is uncharacterized protein (92 aa).

Residues lysine 24–glutamate 89 form the HMA domain. The a metal cation site is built by cysteine 35 and cysteine 38.

This is an uncharacterized protein from Haemophilus influenzae (strain ATCC 51907 / DSM 11121 / KW20 / Rd).